The chain runs to 353 residues: Ribosomal RNA small subunit methyltransferase C (353 aa).

This sequence belongs to the methyltransferase superfamily. RsmC family. As to quaternary structure, monomer.

It localises to the cytoplasm. The catalysed reaction is guanosine(1207) in 16S rRNA + S-adenosyl-L-methionine = N(2)-methylguanosine(1207) in 16S rRNA + S-adenosyl-L-homocysteine + H(+). In terms of biological role, specifically methylates the guanine in position 1207 of 16S rRNA in the 30S particle. This Marinomonas sp. (strain MWYL1) protein is Ribosomal RNA small subunit methyltransferase C.